The sequence spans 83 residues: Antitoxin ParD1 (83 aa).

The stretch at 33 to 60 (IRSALRLLEDRETQLRALREALEAGERS) forms a coiled coil. The interval 54–83 (LEAGERSGSSTPFDFDGFLGRKRADASRGR) is disordered.

Belongs to the ParD antitoxin family.

Antitoxin component of a type II toxin-antitoxin (TA) system. The polypeptide is Antitoxin ParD1 (parD1) (Mycobacterium tuberculosis (strain CDC 1551 / Oshkosh)).